Reading from the N-terminus, the 308-residue chain is Elongation factor Ts (308 aa).

Positions 80–83 are involved in Mg(2+) ion dislocation from EF-Tu; the sequence is TDFV.

The protein belongs to the EF-Ts family.

It is found in the cytoplasm. Functionally, associates with the EF-Tu.GDP complex and induces the exchange of GDP to GTP. It remains bound to the aminoacyl-tRNA.EF-Tu.GTP complex up to the GTP hydrolysis stage on the ribosome. The protein is Elongation factor Ts of Parvibaculum lavamentivorans (strain DS-1 / DSM 13023 / NCIMB 13966).